The sequence spans 306 residues: Pantothenate kinase (306 aa).

91–98 contacts ATP; it reads GSVAVGKS.

This sequence belongs to the prokaryotic pantothenate kinase family.

It localises to the cytoplasm. It carries out the reaction (R)-pantothenate + ATP = (R)-4'-phosphopantothenate + ADP + H(+). It functions in the pathway cofactor biosynthesis; coenzyme A biosynthesis; CoA from (R)-pantothenate: step 1/5. This Streptococcus pyogenes serotype M1 protein is Pantothenate kinase (coaA).